The sequence spans 318 residues: Decaprenyl-phosphate phosphoribosyltransferase (318 aa).

Transmembrane regions (helical) follow at residues 33–53 and 59–79; these read WIKN…GIEY and AAKV…IYLI. Lys35 and Tyr77 together coordinate 5-phospho-alpha-D-ribose 1-diphosphate. Asn80 and Asp84 together coordinate Mg(2+). Position 94 (Lys94) interacts with 5-phospho-alpha-D-ribose 1-diphosphate. 2 helical membrane passes run 99–119 and 121–141; these read IAAG…LAVA and LVIS…YIAV. Residues Lys150 and Arg167 each coordinate 5-phospho-alpha-D-ribose 1-diphosphate. Helical transmembrane passes span 153 to 173 and 177 to 197; these read AVLD…AGGV and IPLS…MAAG. Lys198 contributes to the trans,octa-cis-decaprenyl phosphate binding site. The next 3 membrane-spanning stretches (helical) occupy residues 225–245, 262–282, and 298–318; these read LRFV…LWAF, SWYA…AVDI, and RVLQ…IYFS.

This sequence belongs to the UbiA prenyltransferase family. DPPR synthase subfamily. It depends on Mg(2+) as a cofactor.

The protein resides in the cell inner membrane. The enzyme catalyses trans,octa-cis-decaprenyl phosphate + 5-phospho-alpha-D-ribose 1-diphosphate + H(+) = trans,octa-cis-decaprenylphospho-beta-D-ribofuranose 5-phosphate + diphosphate. The protein operates within cell wall biogenesis; cell wall polysaccharide biosynthesis. In terms of biological role, involved in the biosynthesis of decaprenylphosphoryl arabinose (DPA) a precursor for arabinan synthesis in mycobacterial cell wall biosynthesis. Catalyzes the transfer of a 5-phosphoribosyl residue from phosphoribose diphosphate (PRPP) to decaprenyl phosphate (DP) to form decaprenylphosphoryl-5-phosphoribose (DPPR). The sequence is that of Decaprenyl-phosphate phosphoribosyltransferase from Mycolicibacterium smegmatis (strain ATCC 700084 / mc(2)155) (Mycobacterium smegmatis).